We begin with the raw amino-acid sequence, 332 residues long: tRNA-dihydrouridine(20/20a) synthase (332 aa).

FMN contacts are provided by residues 20-22 (PMM) and Gln-73. Cys-103 (proton donor) is an active-site residue. FMN is bound by residues Lys-142, His-174, 214 to 216 (NGG), and 236 to 237 (GR).

This sequence belongs to the Dus family. DusA subfamily. FMN serves as cofactor.

The catalysed reaction is 5,6-dihydrouridine(20) in tRNA + NADP(+) = uridine(20) in tRNA + NADPH + H(+). It catalyses the reaction 5,6-dihydrouridine(20) in tRNA + NAD(+) = uridine(20) in tRNA + NADH + H(+). The enzyme catalyses 5,6-dihydrouridine(20a) in tRNA + NADP(+) = uridine(20a) in tRNA + NADPH + H(+). It carries out the reaction 5,6-dihydrouridine(20a) in tRNA + NAD(+) = uridine(20a) in tRNA + NADH + H(+). In terms of biological role, catalyzes the synthesis of 5,6-dihydrouridine (D), a modified base found in the D-loop of most tRNAs, via the reduction of the C5-C6 double bond in target uridines. Specifically modifies U20 and U20a in tRNAs. The polypeptide is tRNA-dihydrouridine(20/20a) synthase (Pseudomonas aeruginosa (strain ATCC 15692 / DSM 22644 / CIP 104116 / JCM 14847 / LMG 12228 / 1C / PRS 101 / PAO1)).